Here is a 358-residue protein sequence, read N- to C-terminus: Peptide chain release factor 1 (358 aa).

Gln-235 is subject to N5-methylglutamine.

The protein belongs to the prokaryotic/mitochondrial release factor family. Post-translationally, methylated by PrmC. Methylation increases the termination efficiency of RF1.

The protein localises to the cytoplasm. Functionally, peptide chain release factor 1 directs the termination of translation in response to the peptide chain termination codons UAG and UAA. This Neisseria gonorrhoeae (strain NCCP11945) protein is Peptide chain release factor 1.